Here is a 901-residue protein sequence, read N- to C-terminus: HTH-type transcriptional regulator MalT (901 aa).

39 to 46 is an ATP binding site; sequence SPAGYGKT. The HTH luxR-type domain occupies 829–894; sequence ELIRTSPLTQ…AAVQHAQKLL (66 aa). A DNA-binding region (H-T-H motif) is located at residues 853–872; that stretch reads NEQIAGELEVAATTIKTHIR.

This sequence belongs to the MalT family. In terms of assembly, monomer in solution. Oligomerizes to an active state in the presence of the positive effectors ATP and maltotriose.

With respect to regulation, activated by ATP and maltotriose, which are both required for DNA binding. Functionally, positively regulates the transcription of the maltose regulon whose gene products are responsible for uptake and catabolism of malto-oligosaccharides. Specifically binds to the promoter region of its target genes, recognizing a short DNA motif called the MalT box. The protein is HTH-type transcriptional regulator MalT of Escherichia coli O45:K1 (strain S88 / ExPEC).